The primary structure comprises 539 residues: CTP synthase (539 aa).

The interval 1–272 is amidoligase domain; it reads MTLRSKMTKY…AQIILSHFKI (272 aa). S19 provides a ligand contact to CTP. Residue S19 participates in UTP binding. 20–25 lines the ATP pocket; sequence GLGKGV. Residue Y60 coordinates L-glutamine. D77 provides a ligand contact to ATP. Mg(2+) is bound by residues D77 and E147. CTP is bound by residues 154-156, 193-198, and K229; these read DIE and KSKPTQ. Residues 193 to 198 and K229 each bind UTP; that span reads KSKPTQ. A Glutamine amidotransferase type-1 domain is found at 298 to 539; sequence KILMVGKYVE…SFLRVLIKNN (242 aa). G360 is a binding site for L-glutamine. The active-site Nucleophile; for glutamine hydrolysis is the C387. L-glutamine contacts are provided by residues 388–391, E410, and R469; that span reads LGFQ. Catalysis depends on residues H514 and E516.

It belongs to the CTP synthase family. Homotetramer.

It catalyses the reaction UTP + L-glutamine + ATP + H2O = CTP + L-glutamate + ADP + phosphate + 2 H(+). The catalysed reaction is L-glutamine + H2O = L-glutamate + NH4(+). It carries out the reaction UTP + NH4(+) + ATP = CTP + ADP + phosphate + 2 H(+). It functions in the pathway pyrimidine metabolism; CTP biosynthesis via de novo pathway; CTP from UDP: step 2/2. With respect to regulation, allosterically activated by GTP, when glutamine is the substrate; GTP has no effect on the reaction when ammonia is the substrate. The allosteric effector GTP functions by stabilizing the protein conformation that binds the tetrahedral intermediate(s) formed during glutamine hydrolysis. Inhibited by the product CTP, via allosteric rather than competitive inhibition. Its function is as follows. Catalyzes the ATP-dependent amination of UTP to CTP with either L-glutamine or ammonia as the source of nitrogen. Regulates intracellular CTP levels through interactions with the four ribonucleotide triphosphates. The protein is CTP synthase of Mycoplasmopsis pulmonis (strain UAB CTIP) (Mycoplasma pulmonis).